The chain runs to 553 residues: Putative transport protein YidE (553 aa).

5 helical membrane passes run 4–24, 28–48, 65–85, 95–115, and 158–178; these read IALT…IGNI, GVGF…HFVD, FGLI…FFAS, LFAV…HKIF, and MSYA…MWLM. RCK C-terminal domains are found at residues 192–276 and 279–361; these read KHES…VIGK and DTSL…VVGN. The next 6 helical transmembrane spans lie at 371–391, 393–413, 437–457, 464–484, 493–513, and 533–553; these read MLPV…PLFV, GFPV…ALIL, LGIV…FVDT, LSWI…VGLL, YLTL…LAFA, and LVMF…WGMG.

The protein belongs to the AAE transporter (TC 2.A.81) family. YidE subfamily.

The protein resides in the cell membrane. This chain is Putative transport protein YidE, found in Salmonella newport (strain SL254).